Reading from the N-terminus, the 264-residue chain is L-aspartate dehydrogenase (264 aa).

The NAD(+) site is built by Ala-120 and Asn-186. The active site involves His-216.

It belongs to the L-aspartate dehydrogenase family.

The catalysed reaction is L-aspartate + NADP(+) + H2O = oxaloacetate + NH4(+) + NADPH + H(+). It catalyses the reaction L-aspartate + NAD(+) + H2O = oxaloacetate + NH4(+) + NADH + H(+). It functions in the pathway cofactor biosynthesis; NAD(+) biosynthesis; iminoaspartate from L-aspartate (dehydrogenase route): step 1/1. In terms of biological role, specifically catalyzes the NAD or NADP-dependent dehydrogenation of L-aspartate to iminoaspartate. The polypeptide is L-aspartate dehydrogenase (Serratia proteamaculans (strain 568)).